The following is a 422-amino-acid chain: ATP-dependent RNA helicase RhlB (422 aa).

A Q motif motif is present at residues Q9 to A37. In terms of domain architecture, Helicase ATP-binding spans F40–I219. Position 53-60 (A53–T60) interacts with ATP. Positions D165 to D168 match the DEAD box motif. Residues R245–L390 form the Helicase C-terminal domain. The segment at P394 to Q422 is disordered. A compositionally biased stretch (basic residues) spans R398 to A407.

The protein belongs to the DEAD box helicase family. RhlB subfamily. In terms of assembly, component of the RNA degradosome, which is a multiprotein complex involved in RNA processing and mRNA degradation.

The protein localises to the cytoplasm. It catalyses the reaction ATP + H2O = ADP + phosphate + H(+). Functionally, DEAD-box RNA helicase involved in RNA degradation. Has RNA-dependent ATPase activity and unwinds double-stranded RNA. This chain is ATP-dependent RNA helicase RhlB, found in Hamiltonella defensa subsp. Acyrthosiphon pisum (strain 5AT).